A 454-amino-acid chain; its full sequence is UDP-N-acetylmuramate--L-alanine ligase (454 aa).

112–118 contacts ATP; that stretch reads GTHGKTT.

It belongs to the MurCDEF family.

The protein localises to the cytoplasm. It carries out the reaction UDP-N-acetyl-alpha-D-muramate + L-alanine + ATP = UDP-N-acetyl-alpha-D-muramoyl-L-alanine + ADP + phosphate + H(+). The protein operates within cell wall biogenesis; peptidoglycan biosynthesis. Its function is as follows. Cell wall formation. The protein is UDP-N-acetylmuramate--L-alanine ligase of Nitratidesulfovibrio vulgaris (strain ATCC 29579 / DSM 644 / CCUG 34227 / NCIMB 8303 / VKM B-1760 / Hildenborough) (Desulfovibrio vulgaris).